We begin with the raw amino-acid sequence, 401 residues long: Cysteine desulfurase (401 aa).

Pyridoxal 5'-phosphate is bound by residues 72-73 (AT), Asn-151, Gln-179, and 199-201 (SAH). At Lys-202 the chain carries N6-(pyridoxal phosphate)lysine. Thr-237 provides a ligand contact to pyridoxal 5'-phosphate. Residue Cys-324 is the Cysteine persulfide intermediate of the active site. Cys-324 contacts [2Fe-2S] cluster.

The protein belongs to the class-V pyridoxal-phosphate-dependent aminotransferase family. NifS/IscS subfamily. In terms of assembly, homodimer. It depends on pyridoxal 5'-phosphate as a cofactor.

The enzyme catalyses (sulfur carrier)-H + L-cysteine = (sulfur carrier)-SH + L-alanine. In terms of biological role, catalyzes the removal of elemental sulfur atoms from cysteine to produce alanine. Seems to participate in the biosynthesis of the nitrogenase metalloclusters by providing the inorganic sulfur required for the Fe-S core formation. The chain is Cysteine desulfurase from Enterobacter agglomerans (Erwinia herbicola).